A 221-amino-acid polypeptide reads, in one-letter code: Thiamine-phosphate synthase (221 aa).

Residues 44–48 (QFREK) and N79 contribute to the 4-amino-2-methyl-5-(diphosphooxymethyl)pyrimidine site. Mg(2+)-binding residues include D80 and D99. Position 117 (S117) interacts with 4-amino-2-methyl-5-(diphosphooxymethyl)pyrimidine. Position 143 to 145 (143 to 145 (TSS)) interacts with 2-[(2R,5Z)-2-carboxy-4-methylthiazol-5(2H)-ylidene]ethyl phosphate. K146 contacts 4-amino-2-methyl-5-(diphosphooxymethyl)pyrimidine. 2-[(2R,5Z)-2-carboxy-4-methylthiazol-5(2H)-ylidene]ethyl phosphate-binding positions include G175 and 195-196 (IS).

It belongs to the thiamine-phosphate synthase family. The cofactor is Mg(2+).

It carries out the reaction 2-[(2R,5Z)-2-carboxy-4-methylthiazol-5(2H)-ylidene]ethyl phosphate + 4-amino-2-methyl-5-(diphosphooxymethyl)pyrimidine + 2 H(+) = thiamine phosphate + CO2 + diphosphate. The catalysed reaction is 2-(2-carboxy-4-methylthiazol-5-yl)ethyl phosphate + 4-amino-2-methyl-5-(diphosphooxymethyl)pyrimidine + 2 H(+) = thiamine phosphate + CO2 + diphosphate. It catalyses the reaction 4-methyl-5-(2-phosphooxyethyl)-thiazole + 4-amino-2-methyl-5-(diphosphooxymethyl)pyrimidine + H(+) = thiamine phosphate + diphosphate. It participates in cofactor biosynthesis; thiamine diphosphate biosynthesis; thiamine phosphate from 4-amino-2-methyl-5-diphosphomethylpyrimidine and 4-methyl-5-(2-phosphoethyl)-thiazole: step 1/1. Its function is as follows. Condenses 4-methyl-5-(beta-hydroxyethyl)thiazole monophosphate (THZ-P) and 2-methyl-4-amino-5-hydroxymethyl pyrimidine pyrophosphate (HMP-PP) to form thiamine monophosphate (TMP). The protein is Thiamine-phosphate synthase of Geobacillus kaustophilus (strain HTA426).